The primary structure comprises 328 residues: dITP/XTP pyrophosphatase (328 aa).

The segment at 1 to 129 (MSEKIYEYKD…ATSEQGFGDT (129 aa)) is unknown. An NTP pyrophosphatase region spans residues 130–324 (ILIATRNEGK…KLMEVFPAWQ (195 aa)). Residue 134–139 (TRNEGK) coordinates substrate. Asp196 functions as the Proton acceptor in the catalytic mechanism. Asp196 provides a ligand contact to Mg(2+). Residues Ser197, 280–283 (FGYD), Lys303, and 308–309 (HR) each bind substrate.

It belongs to the HAM1 NTPase family. Homodimer. It depends on Mg(2+) as a cofactor.

It carries out the reaction XTP + H2O = XMP + diphosphate + H(+). The catalysed reaction is dITP + H2O = dIMP + diphosphate + H(+). It catalyses the reaction ITP + H2O = IMP + diphosphate + H(+). Its function is as follows. Pyrophosphatase that catalyzes the hydrolysis of nucleoside triphosphates to their monophosphate derivatives, with a high preference for the non-canonical purine nucleotides XTP (xanthosine triphosphate), dITP (deoxyinosine triphosphate) and ITP. Seems to function as a house-cleaning enzyme that removes non-canonical purine nucleotides from the nucleotide pool, thus preventing their incorporation into DNA/RNA and avoiding chromosomal lesions. This chain is dITP/XTP pyrophosphatase, found in Streptococcus pyogenes serotype M18 (strain MGAS8232).